The chain runs to 438 residues: tRNA(Ile)-lysidine synthase (438 aa).

19 to 24 lines the ATP pocket; sequence SGGIDS.

Belongs to the tRNA(Ile)-lysidine synthase family.

The protein localises to the cytoplasm. The enzyme catalyses cytidine(34) in tRNA(Ile2) + L-lysine + ATP = lysidine(34) in tRNA(Ile2) + AMP + diphosphate + H(+). Functionally, ligates lysine onto the cytidine present at position 34 of the AUA codon-specific tRNA(Ile) that contains the anticodon CAU, in an ATP-dependent manner. Cytidine is converted to lysidine, thus changing the amino acid specificity of the tRNA from methionine to isoleucine. The polypeptide is tRNA(Ile)-lysidine synthase (Buchnera aphidicola subsp. Baizongia pistaciae (strain Bp)).